The sequence spans 183 residues: MKNRLLFLGPPGAGKGTQAARICDSNGMKHLSTGDLLRSEVAAGSELGKEAEAVMNRGELVSDQLVLAIVESQMKALSGEGWLLDGFPRTVPQAEALEPLLNELKQPIEAVVLLELDDAVLITRMLSRGRADDNEDVIRNRLEVYRDKTAPLISYYQNKGLLISVPAQGSVEEITERICKVLD.

Residue 12-17 (GAGKGT) coordinates ATP. Residues 32 to 61 (STGDLLRSEVAAGSELGKEAEAVMNRGELV) form an NMP region. AMP is bound by residues Thr33, Arg38, 59–61 (ELV), 86–89 (GFPR), and Gln93. The tract at residues 127-133 (SRGRADD) is LID. Arg128 lines the ATP pocket. 2 residues coordinate AMP: Arg130 and Arg141. Position 169 (Gly169) interacts with ATP.

It belongs to the adenylate kinase family. As to quaternary structure, monomer.

It is found in the cytoplasm. It carries out the reaction AMP + ATP = 2 ADP. The protein operates within purine metabolism; AMP biosynthesis via salvage pathway; AMP from ADP: step 1/1. Functionally, catalyzes the reversible transfer of the terminal phosphate group between ATP and AMP. Plays an important role in cellular energy homeostasis and in adenine nucleotide metabolism. The polypeptide is Adenylate kinase (Synechococcus sp. (strain CC9902)).